The following is a 345-amino-acid chain: Tryptophan--tRNA ligase (345 aa).

ATP is bound by residues 12 to 14 and 20 to 21; these read RPT and GH. A 'HIGH' region motif is present at residues 13–21; sequence PTGKLHLGH. Aspartate 144 is an L-tryptophan binding site. Residues 156–158, leucine 194, and 202–206 contribute to the ATP site; these read GKD and KMSKS. A 'KMSKS' region motif is present at residues 202–206; sequence KMSKS.

The protein belongs to the class-I aminoacyl-tRNA synthetase family. Homodimer.

The protein resides in the cytoplasm. It catalyses the reaction tRNA(Trp) + L-tryptophan + ATP = L-tryptophyl-tRNA(Trp) + AMP + diphosphate + H(+). Catalyzes the attachment of tryptophan to tRNA(Trp). This is Tryptophan--tRNA ligase from Chlamydia caviae (strain ATCC VR-813 / DSM 19441 / 03DC25 / GPIC) (Chlamydophila caviae).